Here is a 677-residue protein sequence, read N- to C-terminus: Methionine--tRNA ligase (677 aa).

Positions 15–25 (PYANGSIHLGH) match the 'HIGH' region motif. Residues C146, C149, C159, and C162 each contribute to the Zn(2+) site. Positions 333–337 (KMSKS) match the 'KMSKS' region motif. K336 lines the ATP pocket. The tRNA-binding domain maps to 575–677 (DFAKVDLRVA…DGAKPGQQVK (103 aa)).

It belongs to the class-I aminoacyl-tRNA synthetase family. MetG type 1 subfamily. As to quaternary structure, homodimer. The cofactor is Zn(2+).

The protein resides in the cytoplasm. The enzyme catalyses tRNA(Met) + L-methionine + ATP = L-methionyl-tRNA(Met) + AMP + diphosphate. Is required not only for elongation of protein synthesis but also for the initiation of all mRNA translation through initiator tRNA(fMet) aminoacylation. The sequence is that of Methionine--tRNA ligase from Klebsiella pneumoniae (strain 342).